We begin with the raw amino-acid sequence, 130 residues long: S-adenosylmethionine decarboxylase proenzyme (130 aa).

Residue serine 78 is the Schiff-base intermediate with substrate; via pyruvic acid of the active site. At serine 78 the chain carries Pyruvic acid (Ser); by autocatalysis. The active-site Proton acceptor; for processing activity is the histidine 83. Cysteine 98 functions as the Proton donor; for catalytic activity in the catalytic mechanism.

This sequence belongs to the prokaryotic AdoMetDC family. Type 1 subfamily. In terms of assembly, heterotetramer of two alpha and two beta chains arranged as a dimer of alpha/beta heterodimers. The cofactor is pyruvate. In terms of processing, is synthesized initially as an inactive proenzyme. Formation of the active enzyme involves a self-maturation process in which the active site pyruvoyl group is generated from an internal serine residue via an autocatalytic post-translational modification. Two non-identical subunits are generated from the proenzyme in this reaction, and the pyruvate is formed at the N-terminus of the alpha chain, which is derived from the carboxyl end of the proenzyme. The post-translation cleavage follows an unusual pathway, termed non-hydrolytic serinolysis, in which the side chain hydroxyl group of the serine supplies its oxygen atom to form the C-terminus of the beta chain, while the remainder of the serine residue undergoes an oxidative deamination to produce ammonia and the pyruvoyl group blocking the N-terminus of the alpha chain.

It catalyses the reaction S-adenosyl-L-methionine + H(+) = S-adenosyl 3-(methylsulfanyl)propylamine + CO2. It functions in the pathway amine and polyamine biosynthesis; S-adenosylmethioninamine biosynthesis; S-adenosylmethioninamine from S-adenosyl-L-methionine: step 1/1. Functionally, catalyzes the decarboxylation of S-adenosylmethionine to S-adenosylmethioninamine (dcAdoMet), the propylamine donor required for the synthesis of the polyamines spermine and spermidine from the diamine putrescine. The chain is S-adenosylmethionine decarboxylase proenzyme from Aeropyrum pernix (strain ATCC 700893 / DSM 11879 / JCM 9820 / NBRC 100138 / K1).